The following is a 407-amino-acid chain: Peptidase T (407 aa).

His-82 is a Zn(2+) binding site. Asp-84 is an active-site residue. Asp-143 serves as a coordination point for Zn(2+). The active-site Proton acceptor is Glu-177. Residues Glu-178, Asp-200, and His-382 each coordinate Zn(2+).

Belongs to the peptidase M20B family. Zn(2+) serves as cofactor.

Its subcellular location is the cytoplasm. It carries out the reaction Release of the N-terminal residue from a tripeptide.. Functionally, cleaves the N-terminal amino acid of tripeptides. This Streptococcus thermophilus (strain CNRZ 1066) protein is Peptidase T.